The following is a 268-amino-acid chain: MTDQHAFATEQVQLDPTLSPTTEETTHFGFKTVAKSEKQKMVANVFHSVAGKYDLMNDLLSFGIHRVWKRFTIDCSGVRKGHKVLDLAGGTGDFTAKFSRLVGPSGEVILADINDSMLRVGREKLRNLGVVGNVNYVQANAEALPFPDNTFDCVIISFGLRNVTDKDKALRSMFRVLKPGGRLLVLEFSKPILDPLSKIYNFYSFNILPKIGEVVVNDSESYRYLAESIRMHPAQDVLKQMMIDAGFEQVNYYNLSAGIVALHRGYKF.

The disordered stretch occupies residues 1–23 (MTDQHAFATEQVQLDPTLSPTTE). Polar residues predominate over residues 10 to 23 (EQVQLDPTLSPTTE). Residues T91, D112, 140–141 (NA), and S157 each bind S-adenosyl-L-methionine.

It belongs to the class I-like SAM-binding methyltransferase superfamily. MenG/UbiE family.

The catalysed reaction is a 2-demethylmenaquinol + S-adenosyl-L-methionine = a menaquinol + S-adenosyl-L-homocysteine + H(+). It catalyses the reaction a 2-methoxy-6-(all-trans-polyprenyl)benzene-1,4-diol + S-adenosyl-L-methionine = a 5-methoxy-2-methyl-3-(all-trans-polyprenyl)benzene-1,4-diol + S-adenosyl-L-homocysteine + H(+). The protein operates within quinol/quinone metabolism; menaquinone biosynthesis; menaquinol from 1,4-dihydroxy-2-naphthoate: step 2/2. Its pathway is cofactor biosynthesis; ubiquinone biosynthesis. Methyltransferase required for the conversion of demethylmenaquinol (DMKH2) to menaquinol (MKH2) and the conversion of 2-polyprenyl-6-methoxy-1,4-benzoquinol (DDMQH2) to 2-polyprenyl-3-methyl-6-methoxy-1,4-benzoquinol (DMQH2). The protein is Ubiquinone/menaquinone biosynthesis C-methyltransferase UbiE of Pasteurella multocida (strain Pm70).